Here is a 495-residue protein sequence, read N- to C-terminus: Potassium voltage-gated channel subfamily A member 1 (495 aa).

The tract at residues 1–30 (MTVMSGENADEASTAPGHPQDGSYPRQADH) is disordered. The tetramerization domain stretch occupies residues 1–128 (MTVMSGENAD…FYELGEEAME (128 aa)). At 1 to 164 (MTVMSGENAD…LLFEYPESSG (164 aa)) the chain is on the cytoplasmic side. A Phosphoserine modification is found at serine 23. A helical membrane pass occupies residues 165–186 (PARVIAIVSVMVILISIVIFCL). The Extracellular portion of the chain corresponds to 187-220 (ETLPELKDDKDFTGTIHRIDNTTVIYTSNIFTDP). N-linked (GlcNAc...) asparagine glycosylation is present at asparagine 207. The helical transmembrane segment at 221-242 (FFIVETLCIIWFSFELVVRFFA) threads the bilayer. Cysteine 243 is lipidated: S-palmitoyl cysteine. Topologically, residues 243-253 (CPSKTDFFKNI) are cytoplasmic. The helical transmembrane segment at 254–274 (MNFIDIVAIIPYFITLGTEIA) threads the bilayer. The Extracellular segment spans residues 275–287 (EQEGNQKGEQATS). A helical; Voltage-sensor membrane pass occupies residues 288-308 (LAILRVIRLVRVFRIFKLSRH). Residues 309-323 (SKGLQILGQTLKASM) are Cytoplasmic-facing. The tract at residues 310–323 (KGLQILGQTLKASM) is S4-S5 linker. Serine 322 is subject to Phosphoserine; by PKA. The chain crosses the membrane as a helical span at residues 324-345 (RELGLLIFFLFIGVILFSSAVY). At 346-359 (FAEAEEAESHFSSI) the chain is on the extracellular side. The segment at residues 360–371 (PDAFWWAVVSMT) is an intramembrane region (helical). Residues 372–377 (TVGYGD) carry the Selectivity filter motif. Residues 372–379 (TVGYGDMY) lie within the membrane without spanning it. Over 380 to 386 (PVTIGGK) the chain is Extracellular. A helical transmembrane segment spans residues 387-415 (IVGSLCAIAGVLTIALPVPVIVSNFNYFY). The Cytoplasmic portion of the chain corresponds to 416-495 (HRETEGEEQA…VNKSKLLTDV (80 aa)). 2 positions are modified to phosphoserine: serine 437 and serine 439. Serine 446 is subject to Phosphoserine; by PKA. Residues 493-495 (TDV) carry the PDZ-binding motif.

Belongs to the potassium channel family. A (Shaker) (TC 1.A.1.2) subfamily. Kv1.1/KCNA1 sub-subfamily. Homotetramer and heterotetramer with other channel-forming alpha subunits, such as KCNA2, KCNA4, KCNA5, KCNA6 and KCNA7. Channel activity is regulated by interaction with the beta subunits KCNAB1 and KCNAB2. Identified in a complex with KCNA2 and KCNAB2. Interacts (via C-terminus) with the PDZ domains of DLG1, DLG2 and DLG4. Interacts with LGI1 within a complex containing LGI1, KCNA4 and KCNAB1. Interacts (via N-terminus) with STX1A; this promotes channel inactivation. Interacts (via N-terminus) with the heterodimer formed by GNB1 and GNG2; this promotes channel inactivation. Can interact simultaneously with STX1A and the heterodimer formed by GNB1 and GNG2. Interacts (via cytoplasmic N-terminal domain) with KCNRG; this inhibits channel activity. Interacts with ANK3; this inhibits channel activity. Interacts with ADAM11. Post-translationally, N-glycosylated. Palmitoylated on Cys-243; which may be required for membrane targeting. In terms of processing, phosphorylated on tyrosine residues. Phosphorylation increases in response to NRG1; this inhibits channel activity. Phosphorylation at Ser-446 regulates channel activity by down-regulating expression at the cell membrane. As to expression, detected in brain. Expressed in cerebellar cortex basket cell terminals, the area surround the Purkinje cell soma, and the pinceaux expansions encircling the axon initial segment (at protein level). Detected in the juxtaparanodal regions of the nodes of Ranvier in myelinated axons. Detected in the paranodal region in sciatic nerve. Detected on cell bodies in cerebellum, dorsal and ventral cochlear nucleus, pontine reticular nucleus, mesencephalic trigeminal nucleus, motor trigeminal nucleus and the pricipal sensory trigeminal nucleus. Detected in terminal fields of basket cells in the cerebellum corpus medullare. Detected in hippocampus CA3 pyramidal neurons and in the hilus and stratum moleculare of the dentate gyrus. Detected in the central nucleus and the external nucleus of the inferior colliculus. Detected in fiber tracts in the optic tract, external medullary lamina, stria terminalis, medulla, ventral pallidum and substantia nigra. Detected in neurons from dorsal root ganglion. Detected in neurons in the medial nucleus of the trapezoid body. Detected in midbrain dopamine neuron axon terminals. Detected in brain cortex. Detected in brainstem. Detected in juxtaparanodal regions of the nodes of Ranvier in the vagus nerve, but only at very low levels in the heart. Detected in the islet of Langerhans. Detected at the luminal membrane in distal convoluted tubules in the kidney (at protein level). Detected in hippocampus, thalamus, neocortex and ventral brain cortex, including the piriform and entorhinal cortex and the amygdala. Detected in midbrain dopamine neurons. Detected in heart atrium, ventricle, sinoatrial node and atrioventricular node.

It is found in the cell membrane. Its subcellular location is the cell projection. The protein localises to the axon. The protein resides in the membrane. It localises to the perikaryon. It is found in the dendrite. Its subcellular location is the cell junction. The protein localises to the synapse. The protein resides in the cytoplasmic vesicle. It localises to the endoplasmic reticulum. It is found in the presynaptic cell membrane. Its subcellular location is the presynapse. It carries out the reaction K(+)(in) = K(+)(out). With respect to regulation, inhibited by 4-aminopyridine (4-AP), tetraethylammonium (TEA) and dendrotoxin (DTX), but not by charybdotoxin (CTX). Voltage-gated potassium channel that mediates transmembrane potassium transport in excitable membranes, primarily in the brain and the central nervous system, but also in the kidney. Contributes to the regulation of the membrane potential and nerve signaling, and prevents neuronal hyperexcitability. Forms tetrameric potassium-selective channels through which potassium ions pass in accordance with their electrochemical gradient. The channel alternates between opened and closed conformations in response to the voltage difference across the membrane. Can form functional homotetrameric channels and heterotetrameric channels that contain variable proportions of KCNA1, KCNA2, KCNA4, KCNA5, KCNA6, KCNA7, and possibly other family members as well; channel properties depend on the type of alpha subunits that are part of the channel. Channel properties are modulated by cytoplasmic beta subunits that regulate the subcellular location of the alpha subunits and promote rapid inactivation of delayed rectifier potassium channels. In vivo, membranes probably contain a mixture of heteromeric potassium channel complexes, making it difficult to assign currents observed in intact tissues to any particular potassium channel family member. Homotetrameric KCNA1 forms a delayed-rectifier potassium channel that opens in response to membrane depolarization, followed by slow spontaneous channel closure. In contrast, a heterotetrameric channel formed by KCNA1 and KCNA4 shows rapid inactivation. Regulates neuronal excitability in hippocampus, especially in mossy fibers and medial perforant path axons, preventing neuronal hyperexcitability. May function as down-stream effector for G protein-coupled receptors and inhibit GABAergic inputs to basolateral amygdala neurons. May contribute to the regulation of neurotransmitter release, such as gamma-aminobutyric acid (GABA) release. Plays a role in regulating the generation of action potentials and preventing hyperexcitability in myelinated axons of the vagus nerve, and thereby contributes to the regulation of heart contraction. Required for normal neuromuscular responses. Regulates the frequency of neuronal action potential firing in response to mechanical stimuli, and plays a role in the perception of pain caused by mechanical stimuli, but does not play a role in the perception of pain due to heat stimuli. Required for normal responses to auditory stimuli and precise location of sound sources, but not for sound perception. The use of toxins that block specific channels suggest that it contributes to the regulation of the axonal release of the neurotransmitter dopamine. Required for normal postnatal brain development and normal proliferation of neuronal precursor cells in the brain. Plays a role in the reabsorption of Mg(2+) in the distal convoluted tubules in the kidney and in magnesium ion homeostasis, probably via its effect on the membrane potential. The chain is Potassium voltage-gated channel subfamily A member 1 from Mus musculus (Mouse).